A 510-amino-acid chain; its full sequence is NAD(P)H-quinone oxidoreductase subunit 2 A, chloroplastic (510 aa).

13 consecutive transmembrane segments (helical) span residues 24–44 (LLLF…GLIL), 57–77 (IPWL…ALLF), 99–119 (IFQF…VEYI), 124–144 (MAIT…MFLC), 149–169 (LITI…LSGY), 183–203 (YLLM…WLYG), 227–247 (PGIS…LSPA), 295–315 (WHLL…LIAI), 323–343 (MLAY…IVGD), 354–374 (YMLF…LFGL), 395–415 (ALSL…AGFF), 418–438 (LYLF…IGLL), and 484–504 (MIVC…IIAI).

It belongs to the complex I subunit 2 family. In terms of assembly, NDH is composed of at least 16 different subunits, 5 of which are encoded in the nucleus.

It localises to the plastid. The protein localises to the chloroplast thylakoid membrane. It catalyses the reaction a plastoquinone + NADH + (n+1) H(+)(in) = a plastoquinol + NAD(+) + n H(+)(out). The catalysed reaction is a plastoquinone + NADPH + (n+1) H(+)(in) = a plastoquinol + NADP(+) + n H(+)(out). In terms of biological role, NDH shuttles electrons from NAD(P)H:plastoquinone, via FMN and iron-sulfur (Fe-S) centers, to quinones in the photosynthetic chain and possibly in a chloroplast respiratory chain. The immediate electron acceptor for the enzyme in this species is believed to be plastoquinone. Couples the redox reaction to proton translocation, and thus conserves the redox energy in a proton gradient. The chain is NAD(P)H-quinone oxidoreductase subunit 2 A, chloroplastic from Solanum lycopersicum (Tomato).